The following is an 894-amino-acid chain: DNA mismatch repair protein MutS (894 aa).

632 to 639 serves as a coordination point for ATP; it reads GPNMGGKS.

This sequence belongs to the DNA mismatch repair MutS family.

Functionally, this protein is involved in the repair of mismatches in DNA. It is possible that it carries out the mismatch recognition step. This protein has a weak ATPase activity. In Paraburkholderia xenovorans (strain LB400), this protein is DNA mismatch repair protein MutS.